The primary structure comprises 286 residues: 33 kDa chaperonin (286 aa).

2 cysteine pairs are disulfide-bonded: cysteine 225–cysteine 227 and cysteine 258–cysteine 261.

This sequence belongs to the HSP33 family. Post-translationally, under oxidizing conditions two disulfide bonds are formed involving the reactive cysteines. Under reducing conditions zinc is bound to the reactive cysteines and the protein is inactive.

It is found in the cytoplasm. Functionally, redox regulated molecular chaperone. Protects both thermally unfolding and oxidatively damaged proteins from irreversible aggregation. Plays an important role in the bacterial defense system toward oxidative stress. In Shewanella sediminis (strain HAW-EB3), this protein is 33 kDa chaperonin.